The following is a 405-amino-acid chain: Endo-1,4-beta-xylanase 5 (405 aa).

Positions 1-22 (MTRLATLITLAGLLAVSPGAYA) are cleaved as a signal peptide. Asparagine 27 and asparagine 69 each carry an N-linked (GlcNAc...) asparagine glycan. Residues 32 to 352 (STGAEGLNSL…KPAYTSVSSL (321 aa)) enclose the GH10 domain. Glutamate 166 acts as the Proton donor in catalysis. Residue asparagine 171 is glycosylated (N-linked (GlcNAc...) asparagine). The active-site Nucleophile is glutamate 273. Cysteine 302 and cysteine 308 form a disulfide bridge. A lipid anchor (GPI-anchor amidated glycine) is attached at glycine 380. Positions 381–405 (AGRETVSIAGLTLALSSLAFGMFML) are cleaved as a propeptide — removed in mature form.

Belongs to the glycosyl hydrolase 10 (cellulase F) family.

The protein localises to the cell membrane. It localises to the secreted. The catalysed reaction is Endohydrolysis of (1-&gt;4)-beta-D-xylosidic linkages in xylans.. It functions in the pathway glycan degradation; xylan degradation. Endo-1,4-beta-xylanase involved in the hydrolysis of xylan, a major structural heterogeneous polysaccharide found in plant biomass representing the second most abundant polysaccharide in the biosphere, after cellulose. The chain is Endo-1,4-beta-xylanase 5 (XYL5) from Pyricularia grisea (Crabgrass-specific blast fungus).